Here is a 332-residue protein sequence, read N- to C-terminus: MPNEVYDVTIIGGGPIGLFSAFYSGLRSMKTKIIDAEPAVGGKVRYFFPEKIIRDIGGIPAITGENLVANLKEQAETFHPTIVCNERVVDVTRLTDGTFQLITHNGSIHFSKTIVIATGSGTFEVNKLEALHVEDFPLAIHYDVKNIEQFRDKVVAVSGGGNSAIDWAQTLEPIAKQVHLIYRGEDFKAHEESVRELKNSRVKIHIHHEIHELFGTNNQLAEISVICNQTQATKTIETEALFINHGVKVDLGTMAEWGFEQADFGIVVDDEMKTTVPGIFACGDSATYPRKLRIIAAGLHEGPIAINSAKKYLEPTAADEAMISTHHESFIG.

FAD is bound by residues D35, K43, F48, V88, F123, D284, and T325.

It belongs to the ferredoxin--NADP reductase type 2 family. In terms of assembly, homodimer. It depends on FAD as a cofactor.

The enzyme catalyses 2 reduced [2Fe-2S]-[ferredoxin] + NADP(+) + H(+) = 2 oxidized [2Fe-2S]-[ferredoxin] + NADPH. This chain is Ferredoxin--NADP reductase 1, found in Listeria welshimeri serovar 6b (strain ATCC 35897 / DSM 20650 / CCUG 15529 / CIP 8149 / NCTC 11857 / SLCC 5334 / V8).